We begin with the raw amino-acid sequence, 79 residues long: Calcium/calmodulin-dependent protein kinase II inhibitor 2 (79 aa).

The segment at 1–21 is disordered; that stretch reads MSEILPYGEDKMGRFGADPEG. An inhibitory domain region spans residues 43 to 69; it reads KRPPKLGQIGRAKRVVIEDDRIDDVLK.

The protein belongs to the CAMK2N family. As to quaternary structure, interacts with CAMK2A and CAMK2B in the presence of Ca(2+)/calmodulin or after autophosphorylation.

The protein localises to the nucleus. The protein resides in the cytoplasm. Its subcellular location is the cytosol. It localises to the synapse. In terms of biological role, potent and specific cellular inhibitor of CaM-kinase II (CAMK2). Traps Ca(2+)/calmodulin on CAMK2. The polypeptide is Calcium/calmodulin-dependent protein kinase II inhibitor 2 (Camk2n2) (Mus musculus (Mouse)).